The following is a 433-amino-acid chain: ATP-dependent protease ATPase subunit HslU (433 aa).

ATP-binding positions include valine 18, 60 to 65, aspartate 246, glutamate 311, and arginine 383; that span reads GVGKTE.

Belongs to the ClpX chaperone family. HslU subfamily. A double ring-shaped homohexamer of HslV is capped on each side by a ring-shaped HslU homohexamer. The assembly of the HslU/HslV complex is dependent on binding of ATP.

The protein resides in the cytoplasm. ATPase subunit of a proteasome-like degradation complex; this subunit has chaperone activity. The binding of ATP and its subsequent hydrolysis by HslU are essential for unfolding of protein substrates subsequently hydrolyzed by HslV. HslU recognizes the N-terminal part of its protein substrates and unfolds these before they are guided to HslV for hydrolysis. The chain is ATP-dependent protease ATPase subunit HslU from Nitrobacter hamburgensis (strain DSM 10229 / NCIMB 13809 / X14).